Consider the following 328-residue polypeptide: Transcription initiation factor IIE subunit beta (328 aa).

Positions Q32–G105 are disordered. S52 bears the Phosphoserine mark. Over residues L85–F94 the composition is skewed to acidic residues. 2 positions are modified to phosphoserine: S97 and S106. The TFIIE beta DNA-binding region spans Q113–H187.

The protein belongs to the TFIIE beta subunit family. As to quaternary structure, TFIIE is a tetramer of two alpha (TFA1) and two beta (TFA2) subunits.

The protein resides in the nucleus. Functionally, recruits TFIIH to the initiation complex and stimulates the RNA polymerase II C-terminal domain kinase and DNA-dependent ATPase activities of TFIIH. Both TFIIH and TFIIE are required for promoter clearance by RNA polymerase. This is Transcription initiation factor IIE subunit beta (TFA2) from Saccharomyces cerevisiae (strain ATCC 204508 / S288c) (Baker's yeast).